A 217-amino-acid polypeptide reads, in one-letter code: Protein GrpE (217 aa).

The span at 1-10 (MSDHAEHAAD) shows a compositional bias: basic and acidic residues. Residues 1–39 (MSDHAEHAADAADTDAPEGDDAGGDDGEQAGDDGTSALS) form a disordered region. Residues 12 to 31 (ADTDAPEGDDAGGDDGEQAG) show a composition bias toward acidic residues.

It belongs to the GrpE family. Homodimer.

It localises to the cytoplasm. Functionally, participates actively in the response to hyperosmotic and heat shock by preventing the aggregation of stress-denatured proteins, in association with DnaK and GrpE. It is the nucleotide exchange factor for DnaK and may function as a thermosensor. Unfolded proteins bind initially to DnaJ; upon interaction with the DnaJ-bound protein, DnaK hydrolyzes its bound ATP, resulting in the formation of a stable complex. GrpE releases ADP from DnaK; ATP binding to DnaK triggers the release of the substrate protein, thus completing the reaction cycle. Several rounds of ATP-dependent interactions between DnaJ, DnaK and GrpE are required for fully efficient folding. The chain is Protein GrpE from Halobacterium salinarum (strain ATCC 29341 / DSM 671 / R1).